A 686-amino-acid chain; its full sequence is LEAF RUST 10 DISEASE-RESISTANCE LOCUS RECEPTOR-LIKE PROTEIN KINASE-like 1.3 (686 aa).

An N-terminal signal peptide occupies residues 1–33 (MFSPVLFRFSKPNSFLVLLFFLSYIHFLPCAQS). Residues 34–264 (QREPCDTLFR…AGLSKKGKIG (231 aa)) are Extracellular-facing. Asn-76, Asn-93, Asn-175, Asn-190, and Asn-236 each carry an N-linked (GlcNAc...) asparagine glycan. Residues 265 to 285 (IGFASGFLGATLIGGCLLCIF) form a helical membrane-spanning segment. Residues 286–686 (IRRRKKLATQ…SSSNTTASSF (401 aa)) are Cytoplasmic-facing. The region spanning 358–633 (ENFSKELGDG…DEIVEVLRVI (276 aa)) is the Protein kinase domain. Residues 364-372 (LGDGGFGTV) and Lys-386 each bind ATP. A Phosphotyrosine modification is found at Tyr-432. The active-site Proton acceptor is the Asp-482. Ser-515 carries the post-translational modification Phosphoserine. Thr-516 and Thr-521 each carry phosphothreonine. Tyr-529 carries the post-translational modification Phosphotyrosine. Residues 657-686 (GLLKHGVPPPLSPETDKTTASSSNTTASSF) are disordered. The segment covering 674-686 (TTASSSNTTASSF) has biased composition (low complexity).

The protein belongs to the protein kinase superfamily. Ser/Thr protein kinase family.

The protein localises to the cell membrane. It carries out the reaction L-seryl-[protein] + ATP = O-phospho-L-seryl-[protein] + ADP + H(+). The catalysed reaction is L-threonyl-[protein] + ATP = O-phospho-L-threonyl-[protein] + ADP + H(+). The protein is LEAF RUST 10 DISEASE-RESISTANCE LOCUS RECEPTOR-LIKE PROTEIN KINASE-like 1.3 of Arabidopsis thaliana (Mouse-ear cress).